Consider the following 75-residue polypeptide: MARYFRRRKFCRFTAEGVQEIDYKDIATLKNYITESGKIVPSRITGTRAKYQRQLRRAIKRARYLSLLPYTDRHQ.

The residue at position 2 (alanine 2) is an N-acetylalanine.

This sequence belongs to the bacterial ribosomal protein bS18 family. In terms of assembly, part of the 30S ribosomal subunit. Forms a tight heterodimer with protein bS6.

In terms of biological role, binds as a heterodimer with protein bS6 to the central domain of the 16S rRNA, where it helps stabilize the platform of the 30S subunit. The chain is Small ribosomal subunit protein bS18 (rpsR) from Salmonella typhimurium (strain LT2 / SGSC1412 / ATCC 700720).